A 754-amino-acid chain; its full sequence is MKQRMKKPSLGTFILILILIGILAYVLWQFLSPKLGYKSLSDLEQRIITNAKSATDDNFFWAFGFDISDFRIKVVEQVGNRIESYQVVADPTIIRLYQAGTGGVISENILSQLGSSAPKVNSWREIIQLATKASLTSEIIENAINQKINNALSLVGAGQSVSKNTIVNANLPVIFNFDRPRGNFLSSFIVPYIPFLLISLFGFWLFFRLSQNSQAGGGLFNPGKNQAIRIKSNKKFTDVAGNAEVKEEIAEFVDYLKNPKKYAAAGAKIPKGILLGGPPGTGKTLLAKATAGEANVPFFFISASNFVELYVGVGAKRVRELFKEARAESPAIIFIDELDAIGRSRGSGIGGGHDEREQTLNQLLVEMDGMVENSGILLIGATNRTDVLDPALLRPGRFDRSIIVGLPDIKEREEILKLHAKGKRISQNITLANIAKRTPGFSGAQLENVINEATLLSVREKTQVITGKQIDEAIDRVISGPAKKNRVITEDERTMVAYHEAGHAVVGIKLRSGVKVQKITIVPRGNTGGYNLMLPEHEKYNSTKSELLASIAAFMGGRAAEEIIYGKNEISTGAANDIEKATKIARRMVTEFGMSNLGPIQYEQDNSSPFLGRDYFKNASFSSQVGHEIDIEIREIISSSYKLAIATIQEHRLLLELIKDTLLEKETIVFEEIQQLEQTLKPLPKSTEIEEKQKVNTKDILEELMGSDFANNQEKSYENEDQNQNSLEAINYNIDDQDDDKNDSESKIDSSKEQ.

The Cytoplasmic segment spans residues 1-9 (MKQRMKKPS). Residues 10–30 (LGTFILILILIGILAYVLWQF) traverse the membrane as a helical segment. Topologically, residues 31-186 (LSPKLGYKSL…FDRPRGNFLS (156 aa)) are extracellular. The chain crosses the membrane as a helical span at residues 187–207 (SFIVPYIPFLLISLFGFWLFF). Residues 208-754 (RLSQNSQAGG…ESKIDSSKEQ (547 aa)) lie on the Cytoplasmic side of the membrane. ATP is bound at residue 277–284 (GPPGTGKT). H499 contacts Zn(2+). E500 is a catalytic residue. Zn(2+)-binding residues include H503 and D577. The segment at 713 to 754 (QEKSYENEDQNQNSLEAINYNIDDQDDDKNDSESKIDSSKEQ) is disordered. A compositionally biased stretch (basic and acidic residues) spans 743–754 (DSESKIDSSKEQ).

In the central section; belongs to the AAA ATPase family. This sequence in the C-terminal section; belongs to the peptidase M41 family. Homohexamer. The cofactor is Zn(2+).

It localises to the cell membrane. Its function is as follows. Acts as a processive, ATP-dependent zinc metallopeptidase for both cytoplasmic and membrane proteins. Plays a role in the quality control of integral membrane proteins. The chain is ATP-dependent zinc metalloprotease FtsH from Mesomycoplasma conjunctivae (strain ATCC 25834 / NCTC 10147 / HRC/581) (Mycoplasma conjunctivae).